The chain runs to 182 residues: Translation initiation factor IF-3 (182 aa).

The segment at 1-22 (MPLGDCNISTPDNKQNRKNQEI) is disordered.

Belongs to the IF-3 family. As to quaternary structure, monomer.

The protein resides in the cytoplasm. Its function is as follows. IF-3 binds to the 30S ribosomal subunit and shifts the equilibrium between 70S ribosomes and their 50S and 30S subunits in favor of the free subunits, thus enhancing the availability of 30S subunits on which protein synthesis initiation begins. The sequence is that of Translation initiation factor IF-3 from Xanthomonas axonopodis pv. citri (strain 306).